We begin with the raw amino-acid sequence, 212 residues long: Ribonuclease HII (212 aa).

The 205-residue stretch at 1 to 205 folds into the RNase H type-2 domain; sequence MTICGVDEAG…VQDILDRASQ (205 aa). Residues Asp-7, Glu-8, and Asp-100 each contribute to the a divalent metal cation site.

Belongs to the RNase HII family. It depends on Mn(2+) as a cofactor. Mg(2+) serves as cofactor.

It localises to the cytoplasm. It catalyses the reaction Endonucleolytic cleavage to 5'-phosphomonoester.. Its function is as follows. Endonuclease that specifically degrades the RNA of RNA-DNA hybrids. The polypeptide is Ribonuclease HII (Methanocorpusculum labreanum (strain ATCC 43576 / DSM 4855 / Z)).